A 295-amino-acid polypeptide reads, in one-letter code: Small ribosomal subunit protein uS2 (295 aa).

A disordered region spans residues 242-295 (APVEPTLARELAPEAPAPEAPAEEAPAAEAAPAAEAAPAAEAAPAEASSEEQAG). The span at 264–288 (EEAPAAEAAPAAEAAPAAEAAPAEA) shows a compositional bias: low complexity.

The protein belongs to the universal ribosomal protein uS2 family.

The chain is Small ribosomal subunit protein uS2 from Phenylobacterium zucineum (strain HLK1).